A 222-amino-acid chain; its full sequence is Small ribosomal subunit protein uS7m (222 aa).

Residues 1-14 constitute a mitochondrion transit peptide; it reads MSKKLANFAQKRWI.

It belongs to the universal ribosomal protein uS7 family. As to quaternary structure, component of the mitochondrial ribosome small subunit (28S) which comprises a 12S rRNA and about 30 distinct proteins.

It localises to the mitochondrion. This is Small ribosomal subunit protein uS7m (mrps-7) from Caenorhabditis briggsae.